A 420-amino-acid chain; its full sequence is Dual-specificity RNA methyltransferase RlmN (420 aa).

The Proton acceptor role is filled by Glu-115. In terms of domain architecture, Radical SAM core spans Asp-121–Asp-388. The cysteines at positions 128 and 393 are disulfide-linked. Residues Cys-135, Cys-139, and Cys-142 each contribute to the [4Fe-4S] cluster site. S-adenosyl-L-methionine-binding positions include Gly-217–Glu-218, Ser-249, Ser-271–His-273, and Asn-350. Cys-393 functions as the S-methylcysteine intermediate in the catalytic mechanism.

The protein belongs to the radical SAM superfamily. RlmN family. The cofactor is [4Fe-4S] cluster.

The protein resides in the cytoplasm. It carries out the reaction adenosine(2503) in 23S rRNA + 2 reduced [2Fe-2S]-[ferredoxin] + 2 S-adenosyl-L-methionine = 2-methyladenosine(2503) in 23S rRNA + 5'-deoxyadenosine + L-methionine + 2 oxidized [2Fe-2S]-[ferredoxin] + S-adenosyl-L-homocysteine. The enzyme catalyses adenosine(37) in tRNA + 2 reduced [2Fe-2S]-[ferredoxin] + 2 S-adenosyl-L-methionine = 2-methyladenosine(37) in tRNA + 5'-deoxyadenosine + L-methionine + 2 oxidized [2Fe-2S]-[ferredoxin] + S-adenosyl-L-homocysteine. In terms of biological role, specifically methylates position 2 of adenine 2503 in 23S rRNA and position 2 of adenine 37 in tRNAs. m2A2503 modification seems to play a crucial role in the proofreading step occurring at the peptidyl transferase center and thus would serve to optimize ribosomal fidelity. In Sphingopyxis alaskensis (strain DSM 13593 / LMG 18877 / RB2256) (Sphingomonas alaskensis), this protein is Dual-specificity RNA methyltransferase RlmN.